The sequence spans 141 residues: MAKKVIKLVKLQIPAGKANPAPPVGPALGQAGVNIMGFCKEFNARTQDQAGMIIPVEITVFEDRSFTFITKTPPAAVLLKKAAGIESGSGEPNKNKVASVKRDQVKEIAETKMPDLNAADVDAAMRMVEGTARSMGITIED.

This sequence belongs to the universal ribosomal protein uL11 family. As to quaternary structure, part of the ribosomal stalk of the 50S ribosomal subunit. Interacts with L10 and the large rRNA to form the base of the stalk. L10 forms an elongated spine to which L12 dimers bind in a sequential fashion forming a multimeric L10(L12)X complex. In terms of processing, one or more lysine residues are methylated.

Forms part of the ribosomal stalk which helps the ribosome interact with GTP-bound translation factors. The chain is Large ribosomal subunit protein uL11 from Oceanobacillus iheyensis (strain DSM 14371 / CIP 107618 / JCM 11309 / KCTC 3954 / HTE831).